Reading from the N-terminus, the 193-residue chain is Urease accessory protein UreE (193 aa).

A disordered region spans residues 138-193; that stretch reads RGAYHSHGAHSHDQGHAAHDHGNEHKHDHGHDHVHGPGCDHDHDHDHGHHHDHKHD. Basic and acidic residues predominate over residues 147-193; that stretch reads HSHDQGHAAHDHGNEHKHDHGHDHVHGPGCDHDHDHDHGHHHDHKHD.

It belongs to the UreE family.

It is found in the cytoplasm. In terms of biological role, involved in urease metallocenter assembly. Binds nickel. Probably functions as a nickel donor during metallocenter assembly. This Rhizobium leguminosarum bv. trifolii (strain WSM2304) protein is Urease accessory protein UreE.